The primary structure comprises 248 residues: ATP synthase subunit a, chloroplastic (248 aa).

Helical transmembrane passes span 38–58 (QVLI…TIAV), 96–116 (VPFI…GALL), 135–155 (INTT…AGLA), 200–220 (LVVA…VMFL), and 221–241 (GLFT…AYIG).

It belongs to the ATPase A chain family. As to quaternary structure, F-type ATPases have 2 components, CF(1) - the catalytic core - and CF(0) - the membrane proton channel. CF(1) has five subunits: alpha(3), beta(3), gamma(1), delta(1), epsilon(1). CF(0) has four main subunits: a, b, b' and c.

The protein resides in the plastid. It is found in the chloroplast thylakoid membrane. In terms of biological role, key component of the proton channel; it plays a direct role in the translocation of protons across the membrane. This is ATP synthase subunit a, chloroplastic from Pinus koraiensis (Korean pine).